We begin with the raw amino-acid sequence, 567 residues long: Urease subunit alpha (567 aa).

The 438-residue stretch at 130-567 folds into the Urease domain; that stretch reads GGIDTHIHFI…LPLAQRYFLF (438 aa). Ni(2+) is bound by residues histidine 135, histidine 137, and lysine 218. Lysine 218 carries the N6-carboxylysine modification. Histidine 220 lines the substrate pocket. Ni(2+) contacts are provided by histidine 247 and histidine 273. Histidine 321 serves as the catalytic Proton donor. Position 361 (aspartate 361) interacts with Ni(2+).

This sequence belongs to the metallo-dependent hydrolases superfamily. Urease alpha subunit family. As to quaternary structure, heterotrimer of UreA (gamma), UreB (beta) and UreC (alpha) subunits. Three heterotrimers associate to form the active enzyme. It depends on Ni cation as a cofactor. Carboxylation allows a single lysine to coordinate two nickel ions.

Its subcellular location is the cytoplasm. It carries out the reaction urea + 2 H2O + H(+) = hydrogencarbonate + 2 NH4(+). Its pathway is nitrogen metabolism; urea degradation; CO(2) and NH(3) from urea (urease route): step 1/1. The chain is Urease subunit alpha from Methylobacillus flagellatus (strain ATCC 51484 / DSM 6875 / VKM B-1610 / KT).